The chain runs to 96 residues: Neurotoxin beta-KTx 31.1 (96 aa).

A signal peptide spans 1–21 (MQAKRTILLLLLLGMVALSSC). The propeptide occupies 22–29 (GLREKHVQ). Residues 56–93 (QYGCPIIKDYCSFHCNDLEKHEGYCHGTKCKCNIPNQY) form the BetaSPN-type CS-alpha/beta domain. Intrachain disulfides connect C59–C80, C66–C85, and C70–C87.

Belongs to the long chain scorpion toxin family. Class 1 subfamily. In terms of tissue distribution, expressed by the venom gland.

The protein resides in the secreted. Its function is as follows. Inhibits voltage-gated potassium channel. The chain is Neurotoxin beta-KTx 31.1 from Lychas mucronatus (Chinese swimming scorpion).